The chain runs to 231 residues: DNA mismatch repair protein MutH (231 aa).

It belongs to the MutH family.

The protein localises to the cytoplasm. In terms of biological role, sequence-specific endonuclease that cleaves unmethylated GATC sequences. It is involved in DNA mismatch repair. The polypeptide is DNA mismatch repair protein MutH (Salmonella typhi).